The chain runs to 94 residues: Putative pterin-4-alpha-carbinolamine dehydratase (94 aa).

It belongs to the pterin-4-alpha-carbinolamine dehydratase family.

The catalysed reaction is (4aS,6R)-4a-hydroxy-L-erythro-5,6,7,8-tetrahydrobiopterin = (6R)-L-erythro-6,7-dihydrobiopterin + H2O. This chain is Putative pterin-4-alpha-carbinolamine dehydratase, found in Chloroflexus aggregans (strain MD-66 / DSM 9485).